The sequence spans 105 residues: UPF0122 protein OB1530 (105 aa).

This sequence belongs to the UPF0122 family.

Its function is as follows. Might take part in the signal recognition particle (SRP) pathway. This is inferred from the conservation of its genetic proximity to ftsY/ffh. May be a regulatory protein. The polypeptide is UPF0122 protein OB1530 (Oceanobacillus iheyensis (strain DSM 14371 / CIP 107618 / JCM 11309 / KCTC 3954 / HTE831)).